Consider the following 211-residue polypeptide: Large ribosomal subunit protein uL4 (211 aa).

Residues 41-87 (QAHARQGTASTLTRSEVRGGGRKPYKQKGTGRARQGSIRTPLRPGGG) are disordered. Over residues 60–71 (GGRKPYKQKGTG) the composition is skewed to basic residues.

It belongs to the universal ribosomal protein uL4 family. In terms of assembly, part of the 50S ribosomal subunit.

Functionally, one of the primary rRNA binding proteins, this protein initially binds near the 5'-end of the 23S rRNA. It is important during the early stages of 50S assembly. It makes multiple contacts with different domains of the 23S rRNA in the assembled 50S subunit and ribosome. Forms part of the polypeptide exit tunnel. In Parasynechococcus marenigrum (strain WH8102), this protein is Large ribosomal subunit protein uL4.